Consider the following 199-residue polypeptide: Golgi to ER traffic protein 1 (199 aa).

At Met-1–Ile-11 the chain is on the lumenal side. A helical transmembrane segment spans residues Leu-12–Ser-31. Topologically, residues Thr-32 to Ile-115 are cytoplasmic. The stretch at Tyr-76 to Leu-116 forms a coiled coil. The helical transmembrane segment at Leu-116 to Phe-136 threads the bilayer. At Tyr-137–Ala-160 the chain is on the lumenal side. Residues Val-161 to Phe-177 traverse the membrane as a helical segment. At Ser-178 to Glu-199 the chain is on the cytoplasmic side.

Belongs to the WRB/GET1 family. In terms of assembly, component of the Golgi to ER traffic (GET) complex, which is composed of GET1, GET2 and GET3. Within the complex, GET1 and GET2 form a heterotetramer which is stabilized by phosphatidylinositol binding and which binds to the GET3 homodimer.

Its subcellular location is the endoplasmic reticulum membrane. The protein localises to the golgi apparatus membrane. Its function is as follows. Required for the post-translational delivery of tail-anchored (TA) proteins to the endoplasmic reticulum. Together with GET2, acts as a membrane receptor for soluble GET3, which recognizes and selectively binds the transmembrane domain of TA proteins in the cytosol. The GET complex cooperates with the HDEL receptor ERD2 to mediate the ATP-dependent retrieval of resident ER proteins that contain a C-terminal H-D-E-L retention signal from the Golgi to the ER. The chain is Golgi to ER traffic protein 1 from Candida albicans (strain WO-1) (Yeast).